Consider the following 397-residue polypeptide: Probable peptidoglycan glycosyltransferase FtsW (397 aa).

The Cytoplasmic portion of the chain corresponds to M1–A26. The helical transmembrane segment at F27 to V47 threads the bilayer. Residues T48–Q69 are Periplasmic-facing. A helical membrane pass occupies residues G70 to F90. The Cytoplasmic portion of the chain corresponds to Y91–K96. The chain crosses the membrane as a helical span at residues F97 to V117. Residues V118–N126 lie on the Periplasmic side of the membrane. A helical membrane pass occupies residues L127–A147. Topologically, residues A148 to H159 are cytoplasmic. A helical membrane pass occupies residues S160–L180. The Periplasmic portion of the chain corresponds to Q181–G185. The chain crosses the membrane as a helical span at residues T186–W206. Residue R207 is a topological domain, cytoplasmic. Residues L208 to Y228 form a helical membrane-spanning segment. The Periplasmic segment spans residues R229 to G294. Residues L295–I315 form a helical membrane-spanning segment. At G316 to S328 the chain is on the cytoplasmic side. Residues L329–T349 traverse the membrane as a helical segment. The Periplasmic portion of the chain corresponds to T350 to T359. Residues L360–L380 traverse the membrane as a helical segment. At A381 to I397 the chain is on the cytoplasmic side.

This sequence belongs to the SEDS family. FtsW subfamily.

It is found in the cell inner membrane. It carries out the reaction [GlcNAc-(1-&gt;4)-Mur2Ac(oyl-L-Ala-gamma-D-Glu-L-Lys-D-Ala-D-Ala)](n)-di-trans,octa-cis-undecaprenyl diphosphate + beta-D-GlcNAc-(1-&gt;4)-Mur2Ac(oyl-L-Ala-gamma-D-Glu-L-Lys-D-Ala-D-Ala)-di-trans,octa-cis-undecaprenyl diphosphate = [GlcNAc-(1-&gt;4)-Mur2Ac(oyl-L-Ala-gamma-D-Glu-L-Lys-D-Ala-D-Ala)](n+1)-di-trans,octa-cis-undecaprenyl diphosphate + di-trans,octa-cis-undecaprenyl diphosphate + H(+). It functions in the pathway cell wall biogenesis; peptidoglycan biosynthesis. Its function is as follows. Peptidoglycan polymerase that is essential for cell division. The sequence is that of Probable peptidoglycan glycosyltransferase FtsW from Dichelobacter nodosus (strain VCS1703A).